The primary structure comprises 236 residues: 7-cyano-7-deazaguanine synthase (236 aa).

Position 7–17 (7–17) interacts with ATP; that stretch reads CSGGLDSVSLA. Residues Cys185, Cys193, Cys196, and Cys199 each contribute to the Zn(2+) site.

The protein belongs to the QueC family. It depends on Zn(2+) as a cofactor.

The enzyme catalyses 7-carboxy-7-deazaguanine + NH4(+) + ATP = 7-cyano-7-deazaguanine + ADP + phosphate + H2O + H(+). The protein operates within purine metabolism; 7-cyano-7-deazaguanine biosynthesis. In terms of biological role, catalyzes the ATP-dependent conversion of 7-carboxy-7-deazaguanine (CDG) to 7-cyano-7-deazaguanine (preQ(0)). In Rhizobium meliloti (strain 1021) (Ensifer meliloti), this protein is 7-cyano-7-deazaguanine synthase.